The chain runs to 916 residues: Nonsense-mediated mRNA decay factor SMG8 (916 aa).

A disordered region spans residues 566–626; it reads LENSNRTPDT…KNYASQGDAD (61 aa). The span at 589 to 604 shows a compositional bias: polar residues; the sequence is LSGSQKSQDSASNLTF.

Belongs to the SMG8 family.

Involved in nonsense-mediated decay (NMD) of mRNAs containing premature stop codons. Probable component of kinase complex containing SMG1 and recruited to stalled ribosomes. This is Nonsense-mediated mRNA decay factor SMG8 from Aedes aegypti (Yellowfever mosquito).